The following is a 510-amino-acid chain: Light-independent protochlorophyllide reductase subunit B (510 aa).

Residue D36 participates in [4Fe-4S] cluster binding. The active-site Proton donor is the D297. 432 to 433 is a substrate binding site; that stretch reads GM.

It belongs to the ChlB/BchB/BchZ family. Protochlorophyllide reductase is composed of three subunits; ChlL, ChlN and ChlB. Forms a heterotetramer of two ChlB and two ChlN subunits. The cofactor is [4Fe-4S] cluster.

The protein resides in the plastid. It is found in the chloroplast. It carries out the reaction chlorophyllide a + oxidized 2[4Fe-4S]-[ferredoxin] + 2 ADP + 2 phosphate = protochlorophyllide a + reduced 2[4Fe-4S]-[ferredoxin] + 2 ATP + 2 H2O. Its pathway is porphyrin-containing compound metabolism; chlorophyll biosynthesis (light-independent). Its function is as follows. Component of the dark-operative protochlorophyllide reductase (DPOR) that uses Mg-ATP and reduced ferredoxin to reduce ring D of protochlorophyllide (Pchlide) to form chlorophyllide a (Chlide). This reaction is light-independent. The NB-protein (ChlN-ChlB) is the catalytic component of the complex. In Pinus koraiensis (Korean pine), this protein is Light-independent protochlorophyllide reductase subunit B.